Reading from the N-terminus, the 71-residue chain is DNA-directed RNA polymerase subunit omega (71 aa).

The protein belongs to the RNA polymerase subunit omega family. As to quaternary structure, the RNAP catalytic core consists of 2 alpha, 1 beta, 1 beta' and 1 omega subunit. When a sigma factor is associated with the core the holoenzyme is formed, which can initiate transcription.

It catalyses the reaction RNA(n) + a ribonucleoside 5'-triphosphate = RNA(n+1) + diphosphate. In terms of biological role, promotes RNA polymerase assembly. Latches the N- and C-terminal regions of the beta' subunit thereby facilitating its interaction with the beta and alpha subunits. The protein is DNA-directed RNA polymerase subunit omega of Levilactobacillus brevis (strain ATCC 367 / BCRC 12310 / CIP 105137 / JCM 1170 / LMG 11437 / NCIMB 947 / NCTC 947) (Lactobacillus brevis).